The sequence spans 60 residues: Large ribosomal subunit protein uL30 (60 aa).

Belongs to the universal ribosomal protein uL30 family. Part of the 50S ribosomal subunit.

This is Large ribosomal subunit protein uL30 from Polaromonas naphthalenivorans (strain CJ2).